Reading from the N-terminus, the 228-residue chain is Putative lipoprotein LprH (228 aa).

Positions 1–27 are cleaved as a signal peptide; the sequence is MACLGRPGCRGWAGASLVLVVVLALAA. The N-palmitoyl cysteine moiety is linked to residue Cys28. Cys28 carries S-diacylglycerol cysteine lipidation. A helical membrane pass occupies residues 191–211; it reads GLAVVPHAVLVLSACGFKPGF.

It is found in the cell membrane. In Mycobacterium bovis (strain ATCC BAA-935 / AF2122/97), this protein is Putative lipoprotein LprH (lprH).